The chain runs to 50 residues: Small integral membrane protein 46 (50 aa).

A helical transmembrane segment spans residues threonine 15–leucine 37.

It localises to the membrane. The polypeptide is Small integral membrane protein 46 (Homo sapiens (Human)).